The sequence spans 339 residues: Catalase-related peroxidase (339 aa).

The N-terminal stretch at 1 to 31 (MIRIRNRWFRWLAIALASLVASIGIATVGFA) is a signal peptide. His-58 is a catalytic residue. Heme is bound at residue Tyr-328.

Belongs to the catalase family. Requires heme as cofactor.

Its subcellular location is the periplasm. Has an organic peroxide-dependent peroxidase activity. The polypeptide is Catalase-related peroxidase (srpA) (Synechococcus elongatus (strain ATCC 33912 / PCC 7942 / FACHB-805) (Anacystis nidulans R2)).